We begin with the raw amino-acid sequence, 87 residues long: Small ribosomal subunit protein bS20 (87 aa).

A compositionally biased stretch (basic residues) spans 1 to 15 (MANTRSAKKMVRKIA). Disordered stretches follow at residues 1 to 22 (MANTRSAKKMVRKIAARTDVNK) and 64 to 87 (KGVTHKNTASRKVSRLSARVKAMA).

Belongs to the bacterial ribosomal protein bS20 family.

Binds directly to 16S ribosomal RNA. The polypeptide is Small ribosomal subunit protein bS20 (Hyphomonas neptunium (strain ATCC 15444)).